Reading from the N-terminus, the 373-residue chain is Queuine tRNA-ribosyltransferase (373 aa).

The active-site Proton acceptor is the Asp-90. Residues 90–94, Asp-144, Gln-193, and Gly-220 contribute to the substrate site; that span reads DSGGF. The interval 251-257 is RNA binding; that stretch reads GVGTPED. The active-site Nucleophile is the Asp-270. The RNA binding; important for wobble base 34 recognition stretch occupies residues 275 to 279; sequence TRNAR. Positions 308, 310, 313, and 339 each coordinate Zn(2+).

It belongs to the queuine tRNA-ribosyltransferase family. Homodimer. Within each dimer, one monomer is responsible for RNA recognition and catalysis, while the other monomer binds to the replacement base PreQ1. Requires Zn(2+) as cofactor.

The enzyme catalyses 7-aminomethyl-7-carbaguanine + guanosine(34) in tRNA = 7-aminomethyl-7-carbaguanosine(34) in tRNA + guanine. It participates in tRNA modification; tRNA-queuosine biosynthesis. Catalyzes the base-exchange of a guanine (G) residue with the queuine precursor 7-aminomethyl-7-deazaguanine (PreQ1) at position 34 (anticodon wobble position) in tRNAs with GU(N) anticodons (tRNA-Asp, -Asn, -His and -Tyr). Catalysis occurs through a double-displacement mechanism. The nucleophile active site attacks the C1' of nucleotide 34 to detach the guanine base from the RNA, forming a covalent enzyme-RNA intermediate. The proton acceptor active site deprotonates the incoming PreQ1, allowing a nucleophilic attack on the C1' of the ribose to form the product. After dissociation, two additional enzymatic reactions on the tRNA convert PreQ1 to queuine (Q), resulting in the hypermodified nucleoside queuosine (7-(((4,5-cis-dihydroxy-2-cyclopenten-1-yl)amino)methyl)-7-deazaguanosine). The protein is Queuine tRNA-ribosyltransferase of Campylobacter jejuni subsp. jejuni serotype O:2 (strain ATCC 700819 / NCTC 11168).